The following is a 447-amino-acid chain: UDP-N-acetylmuramoyl-L-alanyl-D-glutamate--2,6-diaminopimelate ligase (447 aa).

Threonine 21 is a UDP-N-acetyl-alpha-D-muramoyl-L-alanyl-D-glutamate binding site. Position 74-80 (74-80 (GTNGKTT)) interacts with ATP. UDP-N-acetyl-alpha-D-muramoyl-L-alanyl-D-glutamate-binding positions include 117-118 (TT), serine 144, glutamine 150, and arginine 152. The residue at position 184 (lysine 184) is an N6-carboxylysine. Residues arginine 340, 364 to 367 (DNPR), glycine 415, and glutamate 419 each bind meso-2,6-diaminopimelate. The short motif at 364 to 367 (DNPR) is the Meso-diaminopimelate recognition motif element.

The protein belongs to the MurCDEF family. MurE subfamily. The cofactor is Mg(2+). Carboxylation is probably crucial for Mg(2+) binding and, consequently, for the gamma-phosphate positioning of ATP.

Its subcellular location is the cytoplasm. The enzyme catalyses UDP-N-acetyl-alpha-D-muramoyl-L-alanyl-D-glutamate + meso-2,6-diaminopimelate + ATP = UDP-N-acetyl-alpha-D-muramoyl-L-alanyl-gamma-D-glutamyl-meso-2,6-diaminopimelate + ADP + phosphate + H(+). It functions in the pathway cell wall biogenesis; peptidoglycan biosynthesis. In terms of biological role, catalyzes the addition of meso-diaminopimelic acid to the nucleotide precursor UDP-N-acetylmuramoyl-L-alanyl-D-glutamate (UMAG) in the biosynthesis of bacterial cell-wall peptidoglycan. In Helicobacter pylori (strain J99 / ATCC 700824) (Campylobacter pylori J99), this protein is UDP-N-acetylmuramoyl-L-alanyl-D-glutamate--2,6-diaminopimelate ligase.